A 150-amino-acid chain; its full sequence is UPF0756 membrane protein HD_1071 (150 aa).

The next 4 helical transmembrane spans lie at 1–21 (MSLQ…LGVL), 52–72 (YGLT…IVSG), 82–102 (ILSW…WLGG), and 114–134 (IITG…GIPV).

Belongs to the UPF0756 family.

It localises to the cell membrane. The polypeptide is UPF0756 membrane protein HD_1071 (Haemophilus ducreyi (strain 35000HP / ATCC 700724)).